Reading from the N-terminus, the 69-residue chain is Small ribosomal subunit protein bS21 (69 aa).

Residues 49 to 69 are disordered; the sequence is IESAKRKAEKKKRLFSKKDKA.

The protein belongs to the bacterial ribosomal protein bS21 family.

In Leptospira borgpetersenii serovar Hardjo-bovis (strain JB197), this protein is Small ribosomal subunit protein bS21.